The following is a 182-amino-acid chain: Ribosome-recycling factor (182 aa).

It belongs to the RRF family.

It localises to the cytoplasm. In terms of biological role, responsible for the release of ribosomes from messenger RNA at the termination of protein biosynthesis. May increase the efficiency of translation by recycling ribosomes from one round of translation to another. The sequence is that of Ribosome-recycling factor from Prochlorococcus marinus subsp. pastoris (strain CCMP1986 / NIES-2087 / MED4).